A 174-amino-acid polypeptide reads, in one-letter code: Ribosome maturation factor RimM (174 aa).

Positions 98–171 constitute a PRC barrel domain; that stretch reads EGEFYFHQII…TIHIEVMEGL (74 aa).

The protein belongs to the RimM family. As to quaternary structure, binds ribosomal protein uS19.

It localises to the cytoplasm. Its function is as follows. An accessory protein needed during the final step in the assembly of 30S ribosomal subunit, possibly for assembly of the head region. Essential for efficient processing of 16S rRNA. May be needed both before and after RbfA during the maturation of 16S rRNA. It has affinity for free ribosomal 30S subunits but not for 70S ribosomes. This Bacillus pumilus (strain SAFR-032) protein is Ribosome maturation factor RimM.